The sequence spans 421 residues: Gamma-glutamyl phosphate reductase (421 aa).

Belongs to the gamma-glutamyl phosphate reductase family.

It is found in the cytoplasm. It carries out the reaction L-glutamate 5-semialdehyde + phosphate + NADP(+) = L-glutamyl 5-phosphate + NADPH + H(+). The protein operates within amino-acid biosynthesis; L-proline biosynthesis; L-glutamate 5-semialdehyde from L-glutamate: step 2/2. Catalyzes the NADPH-dependent reduction of L-glutamate 5-phosphate into L-glutamate 5-semialdehyde and phosphate. The product spontaneously undergoes cyclization to form 1-pyrroline-5-carboxylate. This chain is Gamma-glutamyl phosphate reductase, found in Pseudomonas fluorescens (strain ATCC BAA-477 / NRRL B-23932 / Pf-5).